The chain runs to 293 residues: Ubiquinone biosynthesis protein COQ9-B, mitochondrial (293 aa).

The tract at residues 21-73 is disordered; that stretch reads LRSDDQKQPPFSSSSTHAETPEHAEEQYQQQQSPPRYTDQAGEESEDYESEEQ. The span at 29–38 shows a compositional bias: polar residues; sequence PPFSSSSTHA. The span at 61 to 72 shows a compositional bias: acidic residues; sequence AGEESEDYESEE. Residue Arg219 coordinates a 1,2-diacylglycero-3-phosphoethanolamine.

The protein belongs to the COQ9 family. In terms of assembly, homodimer. Heterodimer; two heterodimers of COQ7:COQ9 come together on the same side of the lipid pseudo-bilayer and form a curved tetramer with a hydrophobic surface suitable for membrane interaction. These two tetramers assemble into a soluble octamer with a pseudo-bilayer of lipids captured within. Interacts with COQ7; this interaction allows ubiquinone (CoQ) isoprene intermediates presentation to COQ7 and facilitates the COQ7-mediated hydroxylase step.

The protein resides in the mitochondrion. Its pathway is cofactor biosynthesis; ubiquinone biosynthesis. In terms of biological role, membrane-associated protein that warps the membrane surface to access and bind aromatic isoprenes with high specificity, including ubiquinone (CoQ) isoprene intermediates and presents them directly to COQ7, therefore facilitating the COQ7-mediated hydroxylase step. Participates in the biosynthesis of coenzyme Q, also named ubiquinone, an essential lipid-soluble electron transporter for aerobic cellular respiration. This is Ubiquinone biosynthesis protein COQ9-B, mitochondrial (coq9-b) from Xenopus laevis (African clawed frog).